We begin with the raw amino-acid sequence, 191 residues long: Orotate phosphoribosyltransferase (191 aa).

Residue 114–122 (EDVVTTGKS) participates in 5-phospho-alpha-D-ribose 1-diphosphate binding. The orotate site is built by T118 and R146.

It belongs to the purine/pyrimidine phosphoribosyltransferase family. PyrE subfamily. As to quaternary structure, homodimer. Mg(2+) is required as a cofactor.

It carries out the reaction orotidine 5'-phosphate + diphosphate = orotate + 5-phospho-alpha-D-ribose 1-diphosphate. It participates in pyrimidine metabolism; UMP biosynthesis via de novo pathway; UMP from orotate: step 1/2. In terms of biological role, catalyzes the transfer of a ribosyl phosphate group from 5-phosphoribose 1-diphosphate to orotate, leading to the formation of orotidine monophosphate (OMP). The sequence is that of Orotate phosphoribosyltransferase from Clostridium botulinum (strain ATCC 19397 / Type A).